The following is a 533-amino-acid chain: Putative phosphate permease jhp_1384 (533 aa).

The next 12 membrane-spanning stretches (helical) occupy residues 23-43 (IALA…FGQA), 47-67 (GLLL…IGAN), 81-101 (AISM…GAII), 129-149 (VMLA…LIGA), 156-176 (SVVG…AINW), 182-202 (IVAS…FFLM), 221-241 (VVPY…IVKV), 248-268 (VGFE…FILF), 286-306 (VNEL…FAHG), 338-358 (VPLW…SLYG), 372-392 (LDKM…LLAS), and 509-529 (LVTV…LGFI).

The protein belongs to the inorganic phosphate transporter (PiT) (TC 2.A.20) family.

The protein localises to the cell membrane. Potential transporter for phosphate. The chain is Putative phosphate permease jhp_1384 from Helicobacter pylori (strain J99 / ATCC 700824) (Campylobacter pylori J99).